Reading from the N-terminus, the 249-residue chain is Triosephosphate isomerase (249 aa).

9 to 11 (NWK) lines the substrate pocket. His-95 (electrophile) is an active-site residue. The Proton acceptor role is filled by Glu-165. Substrate-binding positions include Gly-171, Ser-211, and 232-233 (GG).

Belongs to the triosephosphate isomerase family. In terms of assembly, homodimer.

The protein resides in the cytoplasm. It catalyses the reaction D-glyceraldehyde 3-phosphate = dihydroxyacetone phosphate. It functions in the pathway carbohydrate biosynthesis; gluconeogenesis. Its pathway is carbohydrate degradation; glycolysis; D-glyceraldehyde 3-phosphate from glycerone phosphate: step 1/1. Its function is as follows. Involved in the gluconeogenesis. Catalyzes stereospecifically the conversion of dihydroxyacetone phosphate (DHAP) to D-glyceraldehyde-3-phosphate (G3P). In Chlorobium phaeobacteroides (strain DSM 266 / SMG 266 / 2430), this protein is Triosephosphate isomerase.